The primary structure comprises 322 residues: uncharacterized protein (322 aa).

Composition is skewed to basic residues over residues 1-16 and 43-61; these read MPGN…KSGT and LRPH…RRPV. The segment at 1-69 is disordered; it reads MPGNSRRRGA…PVKRADETET (69 aa). Residues glycine 261, isoleucine 281, and leucine 290 each contribute to the S-adenosyl-L-methionine site.

The protein belongs to the class IV-like SAM-binding methyltransferase superfamily. RNA methyltransferase TrmH family.

This is an uncharacterized protein from Mycobacterium bovis (strain BCG / Pasteur 1173P2).